The following is a 507-amino-acid chain: MFS transporter fsa7 (507 aa).

Residues 1-65 (MATKDPAVTT…PDDPEHPLNW (65 aa)) are disordered. N-linked (GlcNAc...) asparagine glycosylation is present at N64. A helical transmembrane segment spans residues 72-92 (LHLVIVSLFTLAANLAATMFA). N106 carries an N-linked (GlcNAc...) asparagine glycan. Helical transmembrane passes span 111 to 131 (AMTV…LAPL), 146 to 166 (FVYI…MFLV), 169 to 189 (IICG…VADL), 200 to 220 (ALFT…GGFV), and 228 to 248 (WTFR…VIFM). The N-linked (GlcNAc...) asparagine glycan is linked to N252. Helical transmembrane passes span 302 to 322 (PIVL…FLLF), 341 to 361 (GLAY…FSVL), 379 to 399 (LILM…YGWT), 406 to 426 (WIVP…VVIP), 429 to 449 (IYLV…ANLL), and 472 to 492 (GWGN…PWFF).

The protein belongs to the major facilitator superfamily.

The protein resides in the cell membrane. Functionally, efflux pump that might be required for efficient secretion of fusarisetin A or other secondary metabolies produced by the fusarisetin A gene cluster. The chain is MFS transporter fsa7 from Fusarium sp. (strain FN080326).